Here is a 270-residue protein sequence, read N- to C-terminus: Interleukin-33 (270 aa).

Positions 1-65 (MKPKMKYSTN…EACYFRRETT (65 aa)) are homeodomain-like HTH domain. Residues 1–94 (MKPKMKYSTN…CQQQSTVECF (94 aa)) constitute a propeptide that is removed on maturation. An interaction with RELA region spans residues 64–111 (TTKRPSLKTGRKHKRHLVLAACQQQSTVECFAFGISGVQKYTRALHDS).

The protein belongs to the IL-1 family. Highly divergent. As to quaternary structure, forms a 1:1:1 heterotrimeric complex with its primary high-affinity receptor IL1RL1 and the coreceptor IL1RAP. Interacts with cargo receptor TMED10; the interaction mediates the translocation from the cytoplasm into the ERGIC (endoplasmic reticulum-Golgi intermediate compartment) and thereby secretion. In terms of assembly, (Microbial infection) Interacts (in reduced form) with H.polygyrus ARI. Post-translationally, the full-length protein can be released from cells and is able to signal via the IL1RL1/ST2 receptor. However, proteolytic processing by CELA1, CSTG/cathepsin G and ELANE/neutrophil elastase produces C-terminal peptides that are more active than the unprocessed full length protein. May also be proteolytically processed by calpains. Proteolytic cleavage mediated by apoptotic caspases including CASP3 and CASP7 results in IL33 inactivation. In vitro proteolytic cleavage by CASP1 was reported but could not be confirmed in vivo suggesting that IL33 is probably not a direct substrate for that caspase. Expressed at high level in high endothelial venules found in tonsils, Peyer patches and mesenteric lymph nodes. Almost undetectable in placenta.

Its subcellular location is the nucleus. The protein resides in the chromosome. It is found in the cytoplasm. It localises to the cytoplasmic vesicle. The protein localises to the secretory vesicle. Its subcellular location is the secreted. Its function is as follows. Cytokine that binds to and signals through the IL1RL1/ST2 receptor which in turn activates NF-kappa-B and MAPK signaling pathways in target cells. Involved in the maturation of Th2 cells inducing the secretion of T-helper type 2-associated cytokines. Also involved in activation of mast cells, basophils, eosinophils and natural killer cells. Acts as an enhancer of polarization of alternatively activated macrophages. Acts as a chemoattractant for Th2 cells, and may function as an 'alarmin', that amplifies immune responses during tissue injury. Induces rapid UCP2-dependent mitochondrial rewiring that attenuates the generation of reactive oxygen species and preserves the integrity of Krebs cycle required for persistent production of itaconate and subsequent GATA3-dependent differentiation of inflammation-resolving alternatively activated macrophages. Functionally, in quiescent endothelia the uncleaved form is constitutively and abundantly expressed, and acts as a chromatin-associated nuclear factor with transcriptional repressor properties, it may sequester nuclear NF-kappaB/RELA, lowering expression of its targets. This form is rapidely lost upon angiogenic or pro-inflammatory activation. This is Interleukin-33 from Homo sapiens (Human).